Consider the following 137-residue polypeptide: Peptide methionine sulfoxide reductase MsrB (137 aa).

The 123-residue stretch at 7–129 folds into the MsrB domain; the sequence is PDHPATELNE…NSASLSFTDG (123 aa). Zn(2+)-binding residues include C46, C49, C95, and C98. The Nucleophile role is filled by C118.

This sequence belongs to the MsrB Met sulfoxide reductase family. Zn(2+) serves as cofactor.

The catalysed reaction is L-methionyl-[protein] + [thioredoxin]-disulfide + H2O = L-methionyl-(R)-S-oxide-[protein] + [thioredoxin]-dithiol. In Serratia proteamaculans (strain 568), this protein is Peptide methionine sulfoxide reductase MsrB.